A 209-amino-acid polypeptide reads, in one-letter code: Large ribosomal subunit protein uL4 (209 aa).

A disordered region spans residues 45–80 (RQGTHKAKERSELSGSTRKLIRQKGSGGARRGDINS).

This sequence belongs to the universal ribosomal protein uL4 family. Part of the 50S ribosomal subunit.

Its function is as follows. One of the primary rRNA binding proteins, this protein initially binds near the 5'-end of the 23S rRNA. It is important during the early stages of 50S assembly. It makes multiple contacts with different domains of the 23S rRNA in the assembled 50S subunit and ribosome. Forms part of the polypeptide exit tunnel. This Porphyromonas gingivalis (strain ATCC BAA-308 / W83) protein is Large ribosomal subunit protein uL4.